The following is a 761-amino-acid chain: Neutral ceramidase (761 aa).

Topologically, residues 1–11 are cytoplasmic; sequence MAKRTFSSLEA. The helical; Signal-anchor for type II membrane protein transmembrane segment at 12-32 threads the bilayer; the sequence is FLIFLLVMMTAITVALLTLLF. At 33–761 the chain is on the lumenal side; the sequence is VTSGTIENHK…ISSPFEIVTT (729 aa). The disordered stretch occupies residues 43-76; the sequence is DSGNHWVSTTQGPTTTQSSPTTQTPTTQTPDLPP. Residues 50-76 show a composition bias toward low complexity; the sequence is STTQGPTTTQSSPTTQTPTTQTPDLPP. Residues Thr-51, Thr-52, Thr-56, Thr-57, and Thr-58 are each glycosylated (O-linked (GalNAc...) threonine). 2 O-linked (GalNAc...) serine glycosylation sites follow: Ser-60 and Ser-61. Thr-63, Thr-64, Thr-66, Thr-68, Thr-69, and Thr-71 each carry an O-linked (GalNAc...) threonine glycan. Leu-115 provides a ligand contact to Ca(2+). His-175 serves as a coordination point for Zn(2+). An N-linked (GlcNAc...) asparagine glycan is attached at Asn-198. His-284 lines the Zn(2+) pocket. Ser-335 (nucleophile) is an active-site residue. 2 cysteine pairs are disulfide-bonded: Cys-343-Cys-357 and Cys-350-Cys-365. N-linked (GlcNAc...) asparagine glycosylation is found at Asn-412 and Asn-449. The cysteines at positions 429 and 479 are disulfide-linked. Zn(2+) contacts are provided by Glu-521 and Tyr-560. 3 residues coordinate Ca(2+): Asp-693, Ser-695, and Thr-698. The required for correct folding and localization stretch occupies residues 751–761; that stretch reads GISSPFEIVTT.

This sequence belongs to the neutral ceramidase family. It depends on Zn(2+) as a cofactor. Proteolytic cleavage of the N-terminus removes the signal-anchor and produces a soluble form of the protein. Post-translationally, N-glycosylated. Required for enzyme activity. In terms of processing, O-glycosylated. Required to retain it as a type II membrane protein at the cell surface. Phosphorylated. May prevent ubiquitination and subsequent degradation. Post-translationally, ubiquitinated, leading to its degradation by the proteasome. Ubiquitination is triggered by nitric oxide. Highly expressed in brain, kidney and heart. Expressed at lower level in other tissues such as liver. Expressed in intestine, kidney and liver (at protein level). Localizes in the epithelia of the jejunum and ileum.

It is found in the cell membrane. The protein localises to the membrane raft. It localises to the membrane. Its subcellular location is the caveola. The protein resides in the golgi apparatus membrane. It is found in the mitochondrion. The protein localises to the secreted. It localises to the extracellular exosome. The enzyme catalyses an N-acylsphing-4-enine + H2O = sphing-4-enine + a fatty acid. It carries out the reaction N-hexadecanoylsphing-4-enine + H2O = sphing-4-enine + hexadecanoate. It catalyses the reaction N-tetradecanoylsphing-4-enine + H2O = tetradecanoate + sphing-4-enine. The catalysed reaction is N-(9Z-octadecenoyl)-sphing-4-enine + H2O = sphing-4-enine + (9Z)-octadecenoate. The enzyme catalyses N-(15Z-tetracosenoyl)-sphing-4-enine + H2O = (15Z)-tetracosenoate + sphing-4-enine. It carries out the reaction N-octanoylsphing-4-enine + H2O = octanoate + sphing-4-enine. It catalyses the reaction N-dodecanoylsphing-4-enine + H2O = dodecanoate + sphing-4-enine. The catalysed reaction is N-(hexanoyl)sphing-4-enine + H2O = hexanoate + sphing-4-enine. The enzyme catalyses N-octadecanoylsphing-4-enine + H2O = sphing-4-enine + octadecanoate. It carries out the reaction sphinganine + hexadecanoate = N-hexadecanoylsphinganine + H2O. It catalyses the reaction N-(octadecanoyl)-sphinganine + H2O = sphinganine + octadecanoate. Its pathway is lipid metabolism; sphingolipid metabolism. Its activity is regulated as follows. The reverse reaction is inhibited by Zn(2+) and Cu(2+). Inhibited by cardiolipin and phosphatidic acid. In terms of biological role, plasma membrane ceramidase that hydrolyzes sphingolipid ceramides into sphingosine and free fatty acids at neutral pH. Ceramides, sphingosine, and its phosphorylated form sphingosine-1-phosphate are bioactive lipids that mediate cellular signaling pathways regulating several biological processes including cell proliferation, apoptosis and differentiation. Also catalyzes the reverse reaction allowing the synthesis of ceramides from fatty acids and sphingosine. Together with sphingomyelinase, participates in the production of sphingosine and sphingosine-1-phosphate from the degradation of sphingomyelin, a sphingolipid enriched in the plasma membrane of cells. Also participates in the hydrolysis of ceramides from the extracellular milieu allowing the production of sphingosine-1-phosphate inside and outside cells. This is the case for instance with the digestion of dietary sphingolipids in the intestinal tract. The chain is Neutral ceramidase (Asah2) from Rattus norvegicus (Rat).